The sequence spans 1061 residues: TonB-dependent transporter Oar (1061 aa).

Residues 1 to 26 (MHLNRVLRETGVVVAAGLLYGSAAFA) form the signal peptide. The TBDR plug domain occupies 121–243 (EIVGAPPTID…TGGVINAVTR (123 aa)). The 814-residue stretch at 248-1061 (EFHGSVFANW…QVRFGIRYTF (814 aa)) folds into the TBDR beta-barrel domain. Positions 701–722 (RSLAEPGQGTATSCDPSSFESQ) are disordered. Residues 709–722 (GTATSCDPSSFESQ) are compositionally biased toward polar residues.

This sequence belongs to the TonB-dependent receptor family. As to quaternary structure, interacts with TonB. Part of a transport system composed of the outer membrane transporter Oar, the trans-periplasmic binding protein TonB and the inner membrane proteins ExbB and ExbD.

It is found in the cell outer membrane. Functionally, required for secretion of the protease PopC across the bacterial outer membrane. Binds and probably transports PopC from the periplasm to the extracellular milieu. It derives its energy for transport by interacting with the trans-periplasmic membrane protein TonB. Required for cellular adhesion during fruiting body formation, a multicellular developmental program that is induced in response to starvation. The protein is TonB-dependent transporter Oar of Myxococcus xanthus.